Consider the following 341-residue polypeptide: L-threonine 3-dehydrogenase (341 aa).

Cys-38 provides a ligand contact to Zn(2+). Active-site charge relay system residues include Thr-40 and His-43. Residues His-63, Glu-64, Cys-93, Cys-96, Cys-99, and Cys-107 each coordinate Zn(2+). NAD(+)-binding positions include Ile-175, Asp-195, Arg-200, Leu-262 to Ile-264, and Ile-286 to Tyr-287.

The protein belongs to the zinc-containing alcohol dehydrogenase family. As to quaternary structure, homotetramer. It depends on Zn(2+) as a cofactor.

It localises to the cytoplasm. It catalyses the reaction L-threonine + NAD(+) = (2S)-2-amino-3-oxobutanoate + NADH + H(+). It participates in amino-acid degradation; L-threonine degradation via oxydo-reductase pathway; glycine from L-threonine: step 1/2. Its function is as follows. Catalyzes the NAD(+)-dependent oxidation of L-threonine to 2-amino-3-ketobutyrate. The polypeptide is L-threonine 3-dehydrogenase (Shewanella sp. (strain ANA-3)).